Consider the following 291-residue polypeptide: ATP synthase gamma chain (291 aa).

The protein belongs to the ATPase gamma chain family. As to quaternary structure, F-type ATPases have 2 components, CF(1) - the catalytic core - and CF(0) - the membrane proton channel. CF(1) has five subunits: alpha(3), beta(3), gamma(1), delta(1), epsilon(1). CF(0) has three main subunits: a, b and c.

The protein localises to the cell membrane. Functionally, produces ATP from ADP in the presence of a proton gradient across the membrane. The gamma chain is believed to be important in regulating ATPase activity and the flow of protons through the CF(0) complex. The sequence is that of ATP synthase gamma chain from Lachnoclostridium phytofermentans (strain ATCC 700394 / DSM 18823 / ISDg) (Clostridium phytofermentans).